The primary structure comprises 623 residues: ATP-dependent zinc metalloprotease FtsH (623 aa).

Over 1-7 (MNQSFWR) the chain is Cytoplasmic. A helical membrane pass occupies residues 8–28 (PLFAILLFMLVFHLTNIFFAQ). Residues 29-117 (QGAQVAQISY…EVSALSTETP (89 aa)) lie on the Periplasmic side of the membrane. Residues 118–138 (LLLNALIYVAPWVILIAIWWV) form a helical membrane-spanning segment. At 139–623 (GMRSMRSQGP…SLNTAQAPPP (485 aa)) the chain is on the cytoplasmic side. Position 214-221 (214-221 (GPPGTGKT)) interacts with ATP. His-435 contacts Zn(2+). Glu-436 is an active-site residue. Residues His-439 and Asp-511 each contribute to the Zn(2+) site.

The protein in the central section; belongs to the AAA ATPase family. It in the C-terminal section; belongs to the peptidase M41 family. Homohexamer. Zn(2+) is required as a cofactor.

It is found in the cell inner membrane. Acts as a processive, ATP-dependent zinc metallopeptidase for both cytoplasmic and membrane proteins. Plays a role in the quality control of integral membrane proteins. This chain is ATP-dependent zinc metalloprotease FtsH, found in Pelobacter propionicus (strain DSM 2379 / NBRC 103807 / OttBd1).